Reading from the N-terminus, the 623-residue chain is MDSSLFSLKNSFGGFNDEELLRVQKIIEDLELTESIVSKEWVTFALQKKIAEDYSKHLDPFKVFLKKNIKKLKVQKTTEQIKEVAEEDPKMFENVEIEDIIFDTDSLVDESEIPKIKDEPSSSVDVSTARNKNNHNNNNNNNPSLPNKSMFKPTKQEMTNDNIKKVVIADDIGDFDFTTANQPIKQSNPTQLLNYKERKNIGGISYSMNNNEELKTDLSLREKKSCDLKGAGEEFYPIKYHRDTLEQRTKILKESVQSNNYTFPVSLDCQDDESIVRSVGRVWMYDQETILSKRFYLLGNERDSSSSGGSSGSASIFSLENNIPDYSMFSGQVVMAESKKIAGSHFYYTNKLYTPNPLPFFSQRKECGDINVMIASGPFDLQKSTPDYTPLDDLCNVVSNKKPHILFLMGPFIDESNVHIKKYSETFSELFNNLMKKLNDNIPSTTKVLIVPSLNDVDHEYIFPQPPYVPSVNLNSNILFVPNPFTLIINESFTIGITSSDIYNNLVSKAHFKNKHTPEDIFNMIINQNNYYPMHPAQAPISMRYLQHLNFPGFTPDILVVPKNSPIAAISNDVLCLGVPPIVGNKSTFGSYAELTVTKSKQSLAFDNNIPVSKRTIVNFKNI.

The disordered stretch occupies residues isoleucine 113–phenylalanine 151. Polar residues predominate over residues serine 121–arginine 130.

This sequence belongs to the DNA polymerase alpha subunit B family. In terms of assembly, DNA polymerase alpha:primase is a four subunit enzyme complex, which is assembled throughout the cell cycle, and consists of the two DNA polymerase subunits A and B, and the DNA primase large and small subunits. Subunit B binds to subunit A.

It is found in the nucleus. Functionally, may play an essential role at the early stage of chromosomal DNA replication by coupling the polymerase alpha/primase complex to the cellular replication machinery. The sequence is that of DNA polymerase alpha subunit B (polA2) from Dictyostelium discoideum (Social amoeba).